A 213-amino-acid polypeptide reads, in one-letter code: Amelotin (213 aa).

Residues 1–16 form the signal peptide; the sequence is MKTMILLLCLLGSAQS. Disordered stretches follow at residues 22–43 and 162–213; these read NPASGVPATKPTPGQVTPLPQQ and GAKA…NRTQ. Polar residues predominate over residues 33–43; sequence TPGQVTPLPQQ. Residues 169–180 are compositionally biased toward low complexity; that stretch reads GTTPGHVTTPGV.

This sequence belongs to the amelotin family. Phosphorylated by FAM20C in vitro. Post-translationally, O-glycosylated. Specifically expressed in maturation-stage ameloblasts.

It localises to the secreted. Functionally, is a promoter of calcium phosphate mineralization, playing a critical role in the formation of the compact, mineralized, aprismatic enamel surface layer during the maturation stage of amelogenesis. This Mus musculus (Mouse) protein is Amelotin (Amtn).